Here is a 400-residue protein sequence, read N- to C-terminus: Golgin-45 (400 aa).

The tract at residues 1–36 (MEKMTTLKSFESKGILTSTPIRGAGDGMETEEPPKS) is disordered. Positions 22 to 26 (RGAGD) match the Tankyrase-binding motif motif. Position 53 is a phosphoserine (Ser-53). The stretch at 126–263 (LSEVKKVLEK…LSEREQFRQE (138 aa)) forms a coiled coil. The residue at position 356 (Ser-356) is a Phosphoserine. The segment at 394-400 (QGELLAL) is essential for interaction with GORASP2.

Interacts with GORASP2. Interacts with the GTP-bound form of RAB2, but not with other Golgi Rab proteins. Identified in a complex with RAB2 and GORASP2. Post-translationally, ADP-ribosylated by tankyrase TNKS and TNKS2. Poly-ADP-ribosylated protein is recognized by RNF146, followed by ubiquitination. In terms of processing, ubiquitinated by RNF146 when poly-ADP-ribosylated, leading to its degradation.

The protein resides in the golgi apparatus membrane. In terms of biological role, required for normal Golgi structure and for protein transport from the endoplasmic reticulum (ER) through the Golgi apparatus to the cell surface. This Rattus norvegicus (Rat) protein is Golgin-45.